Consider the following 240-residue polypeptide: Guanylate kinase (240 aa).

The Guanylate kinase-like domain occupies 56 to 236 (GRIFVITGPS…TLNELKSILL (181 aa)). 63–70 (GPSGVGKS) contacts ATP.

It belongs to the guanylate kinase family.

Its subcellular location is the cytoplasm. The catalysed reaction is GMP + ATP = GDP + ADP. Its function is as follows. Essential for recycling GMP and indirectly, cGMP. The polypeptide is Guanylate kinase (gmk) (Mycoplasma genitalium (strain ATCC 33530 / DSM 19775 / NCTC 10195 / G37) (Mycoplasmoides genitalium)).